A 355-amino-acid chain; its full sequence is Guanine nucleotide-binding protein G(q) subunit alpha (355 aa).

A lipid anchor (S-palmitoyl cysteine) is attached at Cys3. The 324-residue stretch at 32-355 folds into the G-alpha domain; that stretch reads KEIKLLLLGT…QHITEVVPGL (324 aa). A G1 motif region spans residues 35–48; the sequence is KLLLLGTGESGKST. Residues 40–47, 174–180, 199–203, 269–272, and Ala326 each bind GTP; these read GTGESGKS, LRVRVPT, DVGGQ, and NKKD. Mg(2+) is bound by residues Ser47 and Thr180. A G2 motif region spans residues 172–180; sequence DVLRVRVPT. The G3 motif stretch occupies residues 195–204; sequence FKMVDVGGQR. Residues 265–272 are G4 motif; it reads ILFLNKKD. The G5 motif stretch occupies residues 324-329; sequence TCATDT.

The protein belongs to the G-alpha family. G(q) subfamily. G proteins are composed of 3 units; alpha, beta and gamma. The alpha chain contains the guanine nucleotide binding site.

In terms of biological role, guanine nucleotide-binding proteins (G proteins) are involved as modulators or transducers in various transmembrane signaling systems. The protein is Guanine nucleotide-binding protein G(q) subunit alpha of Geodia cydonium (Sponge).